A 430-amino-acid polypeptide reads, in one-letter code: Adenylosuccinate synthetase (430 aa).

Residues 12 to 18 (GDEGKGK) and 40 to 42 (GHT) contribute to the GTP site. Catalysis depends on D13, which acts as the Proton acceptor. Mg(2+)-binding residues include D13 and G40. IMP-binding positions include 13–16 (DEGK), 38–41 (NAGH), T130, R144, Q224, T239, and R303. H41 functions as the Proton donor in the catalytic mechanism. 299 to 305 (TNTGRPR) provides a ligand contact to substrate. GTP is bound by residues R305, 331-333 (KLD), and 413-415 (STS).

The protein belongs to the adenylosuccinate synthetase family. In terms of assembly, homodimer. Mg(2+) serves as cofactor.

The protein resides in the cytoplasm. It carries out the reaction IMP + L-aspartate + GTP = N(6)-(1,2-dicarboxyethyl)-AMP + GDP + phosphate + 2 H(+). It functions in the pathway purine metabolism; AMP biosynthesis via de novo pathway; AMP from IMP: step 1/2. In terms of biological role, plays an important role in the de novo pathway of purine nucleotide biosynthesis. Catalyzes the first committed step in the biosynthesis of AMP from IMP. The chain is Adenylosuccinate synthetase from Rhodopseudomonas palustris (strain HaA2).